The following is a 475-amino-acid chain: Protein nucleotidyltransferase YdiU (475 aa).

Residues Gly82, Gly84, Arg85, Lys105, Asp117, Gly118, Arg168, and Arg175 each coordinate ATP. The active-site Proton acceptor is Asp240. 2 residues coordinate Mg(2+): Asn241 and Asp250. Asp250 is a binding site for ATP.

The protein belongs to the SELO family. Mg(2+) is required as a cofactor. Requires Mn(2+) as cofactor.

It carries out the reaction L-seryl-[protein] + ATP = 3-O-(5'-adenylyl)-L-seryl-[protein] + diphosphate. It catalyses the reaction L-threonyl-[protein] + ATP = 3-O-(5'-adenylyl)-L-threonyl-[protein] + diphosphate. The enzyme catalyses L-tyrosyl-[protein] + ATP = O-(5'-adenylyl)-L-tyrosyl-[protein] + diphosphate. The catalysed reaction is L-histidyl-[protein] + UTP = N(tele)-(5'-uridylyl)-L-histidyl-[protein] + diphosphate. It carries out the reaction L-seryl-[protein] + UTP = O-(5'-uridylyl)-L-seryl-[protein] + diphosphate. It catalyses the reaction L-tyrosyl-[protein] + UTP = O-(5'-uridylyl)-L-tyrosyl-[protein] + diphosphate. Functionally, nucleotidyltransferase involved in the post-translational modification of proteins. It can catalyze the addition of adenosine monophosphate (AMP) or uridine monophosphate (UMP) to a protein, resulting in modifications known as AMPylation and UMPylation. This Aeromonas hydrophila subsp. hydrophila (strain ATCC 7966 / DSM 30187 / BCRC 13018 / CCUG 14551 / JCM 1027 / KCTC 2358 / NCIMB 9240 / NCTC 8049) protein is Protein nucleotidyltransferase YdiU.